The primary structure comprises 160 residues: Cytochrome b6-f complex subunit 4 (160 aa).

Transmembrane regions (helical) follow at residues leucine 36–valine 56, leucine 95–glutamate 115, and threonine 131–isoleucine 151.

It belongs to the cytochrome b family. PetD subfamily. In terms of assembly, the 4 large subunits of the cytochrome b6-f complex are cytochrome b6, subunit IV (17 kDa polypeptide, petD), cytochrome f and the Rieske protein, while the 4 small subunits are petG, petL, petM and petN. The complex functions as a dimer.

It is found in the plastid. Its subcellular location is the chloroplast thylakoid membrane. Functionally, component of the cytochrome b6-f complex, which mediates electron transfer between photosystem II (PSII) and photosystem I (PSI), cyclic electron flow around PSI, and state transitions. This Oryza sativa (Rice) protein is Cytochrome b6-f complex subunit 4.